Reading from the N-terminus, the 55-residue chain is Small ribosomal subunit protein eS31 (55 aa).

The Zn(2+) site is built by C27, C30, C45, and C48. Residues 27–48 (CSRCGKGFFMAQHKDRRSCGKC) form a C4-type zinc finger.

Belongs to the eukaryotic ribosomal protein eS31 family. In terms of assembly, part of the 30S ribosomal subunit. Requires Zn(2+) as cofactor.

The polypeptide is Small ribosomal subunit protein eS31 (Cenarchaeum symbiosum (strain A)).